Reading from the N-terminus, the 331-residue chain is L-lactate dehydrogenase A chain (331 aa).

Residues Gly29–Lys57 and Arg98 contribute to the NAD(+) site. Residues Arg105, Asn137, and Arg168 each contribute to the substrate site. An NAD(+)-binding site is contributed by Asn137. His192 functions as the Proton acceptor in the catalytic mechanism. Thr247 is a substrate binding site.

This sequence belongs to the LDH/MDH superfamily. LDH family. Homotetramer.

It localises to the cytoplasm. It carries out the reaction (S)-lactate + NAD(+) = pyruvate + NADH + H(+). The protein operates within fermentation; pyruvate fermentation to lactate; (S)-lactate from pyruvate: step 1/1. Functionally, interconverts simultaneously and stereospecifically pyruvate and lactate with concomitant interconversion of NADH and NAD(+). In Paranotothenia magellanica (Maori cod), this protein is L-lactate dehydrogenase A chain (ldha).